The sequence spans 412 residues: Class E basic helix-loop-helix protein 40 (412 aa).

Residues 1–139 form an essential for interaction with BMAL1, E-box binding and repressor activity against the CLOCK-BMAL1 heterodimer region; the sequence is MERIPSAQPP…LSGRNVETGQ (139 aa). The bHLH domain occupies 52 to 107; that stretch reads TYKLPHRLIEKKRRDRINECIAQLKDLLPEHLKLTTLGHLEKAVVLELTLKHVKAL. The necessary for interaction with RXRA and repressor activity against RXRA stretch occupies residues 75 to 79; it reads LKDLL. An Orange domain is found at 142–175; it reads FCSGFQTCAREVLQYLAKHENTRDLKSSQLVTHL. Lysine 159 is covalently cross-linked (Glycyl lysine isopeptide (Lys-Gly) (interchain with G-Cter in SUMO1, SUMO2 and SUMO3)). A Glycyl lysine isopeptide (Lys-Gly) (interchain with G-Cter in SUMO2) cross-link involves residue lysine 167. Disordered regions lie at residues 183–259 and 275–309; these read LQGG…SEQL and IGAIKQESEEPPTKKNRMQLSDDEGHFTSSDLISS. Serine 235 bears the Phosphoserine mark. The segment covering 248 to 259 has biased composition (basic and acidic residues); it reads ESEKGDLRSEQL. Lysine 279 participates in a covalent cross-link: Glycyl lysine isopeptide (Lys-Gly) (interchain with G-Cter in SUMO1); alternate. Residue lysine 279 forms a Glycyl lysine isopeptide (Lys-Gly) (interchain with G-Cter in SUMO1, SUMO2 and SUMO3); alternate linkage. Lysine 279 participates in a covalent cross-link: Glycyl lysine isopeptide (Lys-Gly) (interchain with G-Cter in SUMO2); alternate. Lysine 288 is covalently cross-linked (Glycyl lysine isopeptide (Lys-Gly) (interchain with G-Cter in SUMO2)). A Phosphoserine modification is found at serine 383.

As to quaternary structure, homodimer. Heterodimer with BHLHE41/DEC2. Interacts with TCF3/E47. Interacts with ubiquitin-conjugating enzyme UBE2I/UBC9. Interacts with HDAC1, SUMO1, RXRA and BMAL1. In terms of processing, ubiquitinated; which may lead to proteasomal degradation. Post-translationally, sumoylation inhibits its ubiquitination and promotes its negative regulation of the CLOCK-BMAL1 heterodimer transcriptional activator activity.

It localises to the cytoplasm. It is found in the nucleus. Its function is as follows. Transcriptional repressor involved in the regulation of the circadian rhythm by negatively regulating the activity of the clock genes and clock-controlled genes. Acts as the negative limb of a novel autoregulatory feedback loop (DEC loop) which differs from the one formed by the PER and CRY transcriptional repressors (PER/CRY loop). Both these loops are interlocked as it represses the expression of PER1/2 and in turn is repressed by PER1/2 and CRY1/2. Represses the activity of the circadian transcriptional activator: CLOCK-BMAL1|BMAL2 heterodimer by competing for the binding to E-box elements (5'-CACGTG-3') found within the promoters of its target genes. Negatively regulates its own expression and the expression of DBP and BHLHE41/DEC2. Acts as a corepressor of RXR and the RXR-LXR heterodimers and represses the ligand-induced RXRA and NR1H3/LXRA transactivation activity. May be involved in the regulation of chondrocyte differentiation via the cAMP pathway. Represses the transcription of NR0B2 and attentuates the transactivation of NR0B2 by the CLOCK-BMAL1 complex. Drives the circadian rhythm of blood pressure through transcriptional repression of ATP1B1 in the cardiovascular system. This chain is Class E basic helix-loop-helix protein 40 (BHLHE40), found in Pongo abelii (Sumatran orangutan).